The following is a 272-amino-acid chain: MNTPQDSSLGREVSYPSQYDPGLLFPIPRSGARAEIGLDDAALPFVGHDRWHAFELSWLDPRGKPQVAVATVQVPCTSPRLIESKSFKLYLNSLNSTRIDSAEALRARIVADLSDCAGAPVQVEFGLPGLRETPLGESIDGLELEIDCYGPPQADFLSANAGEVVEETLVSALLKSNCPVTGQPDWATVSLRYRGPKIDRAGLLRYLVSYREHAEFHEQCVERIFSEVSARCQPQWLEVEARYTRRGGLDINPWRASPGIAAPAATYRELRQ.

Residue 82-84 (IES) coordinates substrate. An NADPH-binding site is contributed by 84–85 (SK). Cys178 (thioimide intermediate) is an active-site residue. Residue Asp185 is the Proton donor of the active site. 217–218 (HE) contacts substrate. 246-247 (RG) contributes to the NADPH binding site.

The protein belongs to the GTP cyclohydrolase I family. QueF type 2 subfamily. Homodimer.

The protein resides in the cytoplasm. It catalyses the reaction 7-aminomethyl-7-carbaguanine + 2 NADP(+) = 7-cyano-7-deazaguanine + 2 NADPH + 3 H(+). It functions in the pathway tRNA modification; tRNA-queuosine biosynthesis. In terms of biological role, catalyzes the NADPH-dependent reduction of 7-cyano-7-deazaguanine (preQ0) to 7-aminomethyl-7-deazaguanine (preQ1). The chain is NADPH-dependent 7-cyano-7-deazaguanine reductase from Stenotrophomonas maltophilia (strain K279a).